Here is a 468-residue protein sequence, read N- to C-terminus: 3-isopropylmalate dehydratase large subunit (468 aa).

Cysteine 349, cysteine 409, and cysteine 412 together coordinate [4Fe-4S] cluster.

It belongs to the aconitase/IPM isomerase family. LeuC type 1 subfamily. As to quaternary structure, heterodimer of LeuC and LeuD. It depends on [4Fe-4S] cluster as a cofactor.

It catalyses the reaction (2R,3S)-3-isopropylmalate = (2S)-2-isopropylmalate. It participates in amino-acid biosynthesis; L-leucine biosynthesis; L-leucine from 3-methyl-2-oxobutanoate: step 2/4. Its function is as follows. Catalyzes the isomerization between 2-isopropylmalate and 3-isopropylmalate, via the formation of 2-isopropylmaleate. This chain is 3-isopropylmalate dehydratase large subunit, found in Shewanella baltica (strain OS185).